The following is a 7524-amino-acid chain: Mucin-19 (7524 aa).

Positions 1–20 (MKLILLYLAVVLCFVGKGAA) are cleaved as a signal peptide. The segment at 20–47 (ARSPTTTRTPTPSTSEKASHVPEATPTY) is disordered. Low complexity predominate over residues 21-34 (RSPTTTRTPTPSTS). The 171-residue stretch at 55–225 (GEATMWGKDK…VCEDGVQYCD (171 aa)) folds into the VWFD 1 domain. Cys79 and Cys224 are joined by a disulfide. In terms of domain architecture, TIL spans 298–353 (CPGKHIYKECGPSNPPTCSNVAPFQDSECVSGCTCPEGYLLDDIGEKGKCVLKEKC). 2 VWFD domains span residues 392–568 (GICK…EGSP) and 851–1025 (STCH…QECS). 6 disulfide bridges follow: Cys394–Cys529, Cys434–Cys442, Cys853–Cys989, Cys875–Cys1024, Cys884–Cys986, and Cys900–Cys907. The span at 1244 to 1261 (AAATRASSSTSGSVETSV) shows a compositional bias: low complexity. Disordered stretches follow at residues 1244–7217 (AAAT…SSLA) and 7249–7297 (SVIK…CPDS). Residues 1262 to 1289 (PATTSTSKAQAHITTASSTETSALNSTA) are compositionally biased toward polar residues. Low complexity-rich tracts occupy residues 1320 to 7099 (PAVS…AGSG) and 7112 to 7217 (STSG…SSLA). Tandem repeats lie at residues 1321 to 1483 (AVST…TTGP), 1484 to 1646 (AVST…TTGP), 1647 to 1809 (AVST…TTGP), 1810 to 1972 (AVST…TTGP), 1973 to 2135 (AVST…TTGP), 2136 to 2298 (AVST…TTGP), 2299 to 2461 (AVST…TTGP), 2462 to 2624 (AVST…TTGP), 2625 to 2787 (AVST…TTGP), 2788 to 2950 (AVST…TTGP), 2951 to 3113 (AVST…TTGP), 3114 to 3276 (AVST…TTGP), 3277 to 3439 (AVST…TTGP), 3440 to 3602 (AVST…TTGP), 3603 to 3765 (AVST…TTGP), 3766 to 3928 (AVST…TTGP), 3929 to 4091 (AVST…TTGP), 4092 to 4254 (AVST…TTGP), 4255 to 4417 (AVST…TTGP), 4418 to 4580 (AVST…TTGP), 4581 to 4743 (AVST…TTGP), 4744 to 4906 (AVST…TTGP), 4907 to 5069 (AVST…TTGP), 5070 to 5232 (AVST…TTGP), 5233 to 5395 (AVST…TTGP), 5396 to 5558 (AVST…TTGP), 5559 to 5721 (AVST…TTGP), 5722 to 5884 (AVST…TTGP), 5885 to 6047 (AVST…TTGP), 6048 to 6210 (AVST…TTGP), 6211 to 6373 (AVST…TTGP), 6374 to 6536 (AVST…TTGP), 6537 to 6699 (AVST…TTGP), 6700 to 6862 (AVST…TTGP), 6863 to 7025 (AVST…TTGP), and 7026 to 7188 (AVST…TTGP). An approximate repeats region spans residues 1321–7188 (AVSTTSAGST…AETAGSTTGP (5868 aa)). A compositionally biased stretch (polar residues) spans 7261 to 7291 (AKSNETTGRTTSMPASTSVAPGVTTSPNISQ). VWFC domains follow at residues 7302–7368 (PVCH…GHCE) and 7370–7432 (RTCL…YKCK). 4 disulfide bridges follow: Cys7435-Cys7482, Cys7449-Cys7496, Cys7458-Cys7512, and Cys7462-Cys7514. A CTCK domain is found at 7435–7519 (CRTTPVNVTV…TTCSCRDQCE (85 aa)).

Specifically expressed in sublingual salivary glands. Expressed by mucous cells of the submandibular gland and submucosal gland of the trachea. Expression is altered in sld (sublingual gland differentiation arrest) mutants.

The protein localises to the secreted. In terms of biological role, may function in ocular mucus homeostasis. The protein is Mucin-19 (Muc19) of Mus musculus (Mouse).